Here is a 106-residue protein sequence, read N- to C-terminus: MTDVTGAPADVLHTLFHSDQGGHEQVVLCQDRASGLKAVIALHSTALGPALGGTRFYPIANEAEAVADALNLARGMSYKNAMAGLEHGGGKAVIIGDPEQIKSEEL.

The active site involves lysine 91.

The protein belongs to the Glu/Leu/Phe/Val dehydrogenases family. As to quaternary structure, homodimer.

It localises to the cytoplasm. It catalyses the reaction L-valine + NAD(+) + H2O = 3-methyl-2-oxobutanoate + NH4(+) + NADH + H(+). It participates in amino-acid degradation; L-valine degradation. In terms of biological role, oxidative deamination of branched-chain amino acids. The catabolism of valine is the major source of fatty acid precursors for macrolide biosynthesis and a vital source of antibiotic precursors. This is Valine dehydrogenase (vdh) from Streptomyces ambofaciens.